A 232-amino-acid chain; its full sequence is Flagellar L-ring protein (232 aa).

An N-terminal signal peptide occupies residues 1–15; the sequence is MKKVLFYVLPFAFFG. A lipid anchor (N-palmitoyl cysteine) is attached at Cys-16. A lipid anchor (S-diacylglycerol cysteine) is attached at Cys-16.

This sequence belongs to the FlgH family. In terms of assembly, the basal body constitutes a major portion of the flagellar organelle and consists of four rings (L,P,S, and M) mounted on a central rod.

It is found in the cell outer membrane. It localises to the bacterial flagellum basal body. In terms of biological role, assembles around the rod to form the L-ring and probably protects the motor/basal body from shearing forces during rotation. This chain is Flagellar L-ring protein, found in Campylobacter jejuni subsp. jejuni serotype O:6 (strain 81116 / NCTC 11828).